The following is a 70-amino-acid chain: Non-histone chromosomal protein H6 (70 aa).

The interval 1–70 is disordered; the sequence is MPKRKSATKG…AAGDGAGNAK (70 aa). Over residues 30–45 the composition is skewed to basic residues; that stretch reads AKPKKAAAPKKAVKGK. Residues 46 to 57 are compositionally biased toward basic and acidic residues; that stretch reads KAAENGDAKAEA.

Belongs to the HMGN family.

The protein resides in the nucleus. It is found in the secreted. In terms of biological role, non-histone protein that probably binds to the inner side of nucleosomal DNA, altering the association between the DNA and the nucleosome octamer. Functionally, oncorhyncin III has antibacterial activity against Gram-positive and Gram-negative bacteria at submicromolar concentrations. The polypeptide is Non-histone chromosomal protein H6 (Oncorhynchus mykiss (Rainbow trout)).